We begin with the raw amino-acid sequence, 150 residues long: Large ribosomal subunit protein bL9 (150 aa).

The protein belongs to the bacterial ribosomal protein bL9 family.

Binds to the 23S rRNA. This chain is Large ribosomal subunit protein bL9, found in Cupriavidus taiwanensis (strain DSM 17343 / BCRC 17206 / CCUG 44338 / CIP 107171 / LMG 19424 / R1) (Ralstonia taiwanensis (strain LMG 19424)).